The chain runs to 554 residues: Propanediol dehydratase large subunit (554 aa).

It belongs to the diol/glycerol dehydratase large subunit family. In terms of assembly, the propanediol dehydratase enzyme is a heterotrimeric complex composed of a large (PduC), a medium (PduD) and a small (PduE) subunit. Adenosylcob(III)alamin serves as cofactor.

It is found in the bacterial microcompartment. The enzyme catalyses propane-1,2-diol = propanal + H2O. The protein operates within polyol metabolism; 1,2-propanediol degradation. Its function is as follows. Part of the PduCDE complex that catalyzes the dehydration of 1,2-propanediol (1,2-PD) to propionaldehyde. This subunit is directly targeted to the bacterial microcompartment (BMC). In terms of biological role, expression of a cosmid containing the full 21-gene pdu operon in E.coli allows E.coli to grow on 1,2-propanediol (1,2-PD) with the appearance of BMCs in its cytoplasm. Functionally, the 1,2-PD-specific bacterial microcompartment (BMC) concentrates low levels of 1,2-PD catabolic enzymes, concentrates volatile reaction intermediates thus enhancing pathway flux and keeps the level of toxic, mutagenic propionaldehyde low. In Citrobacter freundii, this protein is Propanediol dehydratase large subunit.